A 310-amino-acid chain; its full sequence is Beta-ketoacyl-[acyl-carrier-protein] synthase III 1 (310 aa).

Active-site residues include cysteine 112 and histidine 235. The interval 236 to 240 (QANIR) is ACP-binding. Asparagine 265 is an active-site residue.

Belongs to the thiolase-like superfamily. FabH family. As to quaternary structure, homodimer.

The protein resides in the cytoplasm. The catalysed reaction is malonyl-[ACP] + acetyl-CoA + H(+) = 3-oxobutanoyl-[ACP] + CO2 + CoA. It participates in lipid metabolism; fatty acid biosynthesis. Catalyzes the condensation reaction of fatty acid synthesis by the addition to an acyl acceptor of two carbons from malonyl-ACP. Catalyzes the first condensation reaction which initiates fatty acid synthesis and may therefore play a role in governing the total rate of fatty acid production. Possesses both acetoacetyl-ACP synthase and acetyl transacylase activities. Its substrate specificity determines the biosynthesis of branched-chain and/or straight-chain of fatty acids. The polypeptide is Beta-ketoacyl-[acyl-carrier-protein] synthase III 1 (Bacillus anthracis).